A 239-amino-acid polypeptide reads, in one-letter code: 1-(5-phosphoribosyl)-5-[(5-phosphoribosylamino)methylideneamino] imidazole-4-carboxamide isomerase (239 aa).

The active-site Proton acceptor is D8. D129 (proton donor) is an active-site residue.

Belongs to the HisA/HisF family.

It is found in the cytoplasm. It carries out the reaction 1-(5-phospho-beta-D-ribosyl)-5-[(5-phospho-beta-D-ribosylamino)methylideneamino]imidazole-4-carboxamide = 5-[(5-phospho-1-deoxy-D-ribulos-1-ylimino)methylamino]-1-(5-phospho-beta-D-ribosyl)imidazole-4-carboxamide. It functions in the pathway amino-acid biosynthesis; L-histidine biosynthesis; L-histidine from 5-phospho-alpha-D-ribose 1-diphosphate: step 4/9. In Legionella pneumophila (strain Corby), this protein is 1-(5-phosphoribosyl)-5-[(5-phosphoribosylamino)methylideneamino] imidazole-4-carboxamide isomerase.